Here is a 402-residue protein sequence, read N- to C-terminus: Protein DesVIII (402 aa).

It belongs to the cytochrome P450 family. Forms a complex with DesVII.

The protein operates within antibiotic biosynthesis. In terms of biological role, involved in the biosynthesis of the macrolide antibiotics methymycin, neomethymycin, narbomycin, and pikromycin. DesVIII assists the folding of the DesVII polypeptide. However, unlike chaperones, it remains bound to DesVII during catalysis, forming a tight DesVII/DesVIII complex. Although the formation of the DesVII/DesVIII complex is essential for the catalytic activity, DesVIII is unlikely to be involved in catalysis directly. This Streptomyces venezuelae protein is Protein DesVIII.